A 146-amino-acid chain; its full sequence is UPF0260 protein VP2169 (146 aa).

It belongs to the UPF0260 family.

This chain is UPF0260 protein VP2169, found in Vibrio parahaemolyticus serotype O3:K6 (strain RIMD 2210633).